A 138-amino-acid polypeptide reads, in one-letter code: uncharacterized protein (138 aa).

This is an uncharacterized protein from Escherichia coli (strain K12).